Consider the following 474-residue polypeptide: ATP synthase subunit beta (474 aa).

151-158 provides a ligand contact to ATP; the sequence is GGAGVGKT.

It belongs to the ATPase alpha/beta chains family. As to quaternary structure, F-type ATPases have 2 components, CF(1) - the catalytic core - and CF(0) - the membrane proton channel. CF(1) has five subunits: alpha(3), beta(3), gamma(1), delta(1), epsilon(1). CF(0) has three main subunits: a(1), b(2) and c(9-12). The alpha and beta chains form an alternating ring which encloses part of the gamma chain. CF(1) is attached to CF(0) by a central stalk formed by the gamma and epsilon chains, while a peripheral stalk is formed by the delta and b chains.

The protein localises to the cell inner membrane. It catalyses the reaction ATP + H2O + 4 H(+)(in) = ADP + phosphate + 5 H(+)(out). Functionally, produces ATP from ADP in the presence of a proton gradient across the membrane. The catalytic sites are hosted primarily by the beta subunits. In Ruegeria sp. (strain TM1040) (Silicibacter sp.), this protein is ATP synthase subunit beta.